Reading from the N-terminus, the 310-residue chain is Glutamyl-Q tRNA(Asp) synthetase (310 aa).

L-glutamate contacts are provided by residues R8 to S12 and E44. The 'HIGH' region motif lies at P11–S21. Residues C100, C102, Y123, and C127 each coordinate Zn(2+). Positions 183 and 201 each coordinate L-glutamate. The 'KMSKS' region motif lies at K239–Q243. K242 contributes to the ATP binding site.

This sequence belongs to the class-I aminoacyl-tRNA synthetase family. GluQ subfamily. The cofactor is Zn(2+).

In terms of biological role, catalyzes the tRNA-independent activation of glutamate in presence of ATP and the subsequent transfer of glutamate onto a tRNA(Asp). Glutamate is transferred on the 2-amino-5-(4,5-dihydroxy-2-cyclopenten-1-yl) moiety of the queuosine in the wobble position of the QUC anticodon. This Cupriavidus metallidurans (strain ATCC 43123 / DSM 2839 / NBRC 102507 / CH34) (Ralstonia metallidurans) protein is Glutamyl-Q tRNA(Asp) synthetase.